We begin with the raw amino-acid sequence, 120 residues long: PYEKIGAELVKEVAKKTDDVAGDGTTTATVLAQALVKEGLRNVAAGANPLGLKRGIEKAVEKVTETLLKGAKEVETKEQIAATAAISAGDQSIGDLIAEAMDKVGNEGVITVEESNTFGL.

23-27 (DGTTT) contacts ATP.

Belongs to the chaperonin (HSP60) family. As to quaternary structure, forms a cylinder of 14 subunits composed of two heptameric rings stacked back-to-back. Interacts with the co-chaperonin GroES.

It localises to the cytoplasm. The enzyme catalyses ATP + H2O + a folded polypeptide = ADP + phosphate + an unfolded polypeptide.. Its function is as follows. Together with its co-chaperonin GroES, plays an essential role in assisting protein folding. The GroEL-GroES system forms a nano-cage that allows encapsulation of the non-native substrate proteins and provides a physical environment optimized to promote and accelerate protein folding. The polypeptide is Chaperonin GroEL (Mycobacterium kansasii).